Consider the following 711-residue polypeptide: Polyribonucleotide nucleotidyltransferase (711 aa).

2 residues coordinate Mg(2+): aspartate 486 and aspartate 492. The 60-residue stretch at 553 to 612 folds into the KH domain; the sequence is PRIHTIKINPDKIKDVIGKGGSVIRALTEETGTTIEIEDDGTVKIAATDGEKAKHAIRRI. The S1 motif domain occupies 622–690; it reads GRVYTGKVTR…RQGRIRLSIK (69 aa). The disordered stretch occupies residues 690–711; the sequence is KEATEQSQPAAAPEAPAAEQGE. The span at 694–711 shows a compositional bias: low complexity; that stretch reads EQSQPAAAPEAPAAEQGE.

The protein belongs to the polyribonucleotide nucleotidyltransferase family. Component of the RNA degradosome, which is a multiprotein complex involved in RNA processing and mRNA degradation. Mg(2+) is required as a cofactor.

It is found in the cytoplasm. It carries out the reaction RNA(n+1) + phosphate = RNA(n) + a ribonucleoside 5'-diphosphate. Its function is as follows. Involved in mRNA degradation. Catalyzes the phosphorolysis of single-stranded polyribonucleotides processively in the 3'- to 5'-direction. In Shigella dysenteriae serotype 1 (strain Sd197), this protein is Polyribonucleotide nucleotidyltransferase.